We begin with the raw amino-acid sequence, 458 residues long: Histone acetyltransferase KAT8 (458 aa).

Residues 1 to 14 are compositionally biased toward low complexity; the sequence is MAAQGATAAVAATT. The tract at residues 1–52 is disordered; that stretch reads MAAQGATAAVAATTSGIVGEGEPGPGENTSVEGPARSPGRVSPPTPARGEPE. Position 2 is an N-acetylalanine (alanine 2). Phosphoserine occurs at positions 37 and 42. Positions 55–110 constitute a Tudor-knot domain; it reads VEIGETYLCRRPDSTWHSAEVIQSRVNDQEGREEFYVHYVGFNRRLDEWVDKNRLA. An N6-acetyllysine modification is found at lysine 113. The Nuclear localization signal motif lies at 140–149; the sequence is RNQKRKHDEI. The 274-residue stretch at 174–447 folds into the MYST-type HAT domain; the sequence is TKVKYVDKIH…VDSVCLKWAP (274 aa). Residues 174-458 form a sufficient for interaction with KANSL1 region; sequence TKVKYVDKIH…KHKQVKLSKK (285 aa). The C2HC MYST-type zinc finger occupies 207 to 232; that stretch reads LWLCEYCLKYMKFEKSYRFHLGQCQW. Residues cysteine 210, cysteine 213, histidine 226, and cysteine 230 each contribute to the Zn(2+) site. At lysine 274 the chain carries N6-acetyllysine; by autocatalysis. Acetyl-CoA contacts are provided by isoleucine 317, threonine 319, arginine 325, arginine 326, glycine 327, glycine 329, and lysine 330. Residue serine 348 is modified to Phosphoserine. Glutamate 350 acts as the Proton donor/acceptor in catalysis. Acetyl-CoA-binding residues include serine 354, serine 363, tyrosine 408, and lysine 432.

Belongs to the MYST (SAS/MOZ) family. Component of a multisubunit histone acetyltransferase complex (MSL) at least composed of the MOF/KAT8, MSL1/hampin, MSL2L1 and MSL3L1. Component of the NSL complex at least composed of MOF/KAT8, KANSL1, KANSL2, KANSL3, MCRS1, PHF20, OGT1/OGT, WDR5 and HCFC1. Component of some MLL1/MLL complex, at least composed of the core components KMT2A/MLL1, ASH2L, HCFC1, WDR5 and RBBP5, as well as the facultative components BACC1, CHD8, E2F6, HSP70, INO80C, KANSL1, LAS1L, MAX, MCRS1, MGA, MOF/KAT8, PELP1, PHF20, PRP31, RING2, RUVB1/TIP49A, RUVB2/TIP49B, SENP3, TAF1, TAF4, TAF6, TAF7, TAF9 and TEX10. Interacts with the chromodomain of MORF4L1/MRG15. Interacts with ATM (via its Tudor-knot domain); possibly regulating the activity of ATM. Interacts with NELFD. Post-translationally, acetylation at Lys-274 facilitates cognate substrate Lys-binding and acetylation. Although considered as an autoacetylation event, acetylation at Lys-274 probably takes place via a non-enzymatic process following acetyl-CoA-binding, which primes KAT8 for cognate protein-lysine acetylation. Deacetylated by SIRT1.

The protein resides in the nucleus. The protein localises to the chromosome. It localises to the mitochondrion. It carries out the reaction L-lysyl-[histone] + acetyl-CoA = N(6)-acetyl-L-lysyl-[histone] + CoA + H(+). The enzyme catalyses L-lysyl-[protein] + acetyl-CoA = N(6)-acetyl-L-lysyl-[protein] + CoA + H(+). It catalyses the reaction propanoyl-CoA + L-lysyl-[protein] = N(6)-propanoyl-L-lysyl-[protein] + CoA + H(+). Its activity is regulated as follows. The acetyltransferase activity is inhibited by anacardic acid derivatives. Its function is as follows. Histone acetyltransferase that catalyzes histone H4 acetylation at 'Lys-5'- and 'Lys-8' (H4K5ac and H4K8ac) or 'Lys-16' (H4K16ac), depending on the context. Catalytic component of the MSL histone acetyltransferase complex, a multiprotein complex that mediates the majority of histone H4 acetylation at 'Lys-16' (H4K16ac), an epigenetic mark that prevents chromatin compaction. H4K16ac constitutes the only acetylation mark intergenerationally transmitted and regulates key biological processes, such as oogenesis, embryonic stem cell pluripotency, hematopoiesis or glucose metabolism. The MSL complex is required for chromosome stability and genome integrity by maintaining homeostatic levels of H4K16ac. The MSL complex is also involved in gene dosage by promoting up-regulation of genes expressed by the X chromosome. X up-regulation is required to compensate for autosomal biallelic expression. The MSL complex also participates in gene dosage compensation by promoting expression of Tsix non-coding RNA. As part of the NSL histone acetyltransferase complex, catalyzes histone H4 acetylation at 'Lys-5'- and 'Lys-8' (H4K5ac and H4K8ac) at transcription start sites and promotes transcription initiation. The NSL complex also acts as a regulator of gene expression in mitochondria: KAT8 associates with mitochondrial DNA and controls expression of respiratory genes in an acetyltransferase-dependent mechanism. Also functions as an acetyltransferase for non-histone targets, such as ALKBH5, COX17, IRF3, KDM1A/LSD1, LMNA, PAX7 or TP53/p53. Acts as an inhibitor of antiviral immunity by acetylating IRF3, preventing IRF3 recruitment to promoters. Acts as a regulator of asymmetric division in muscle stem cells by mediating acetylation of PAX7. As part of the NSL complex, acetylates TP53/p53 at 'Lys-120'. Acts as a regulator of epithelial-to-mesenchymal transition as part of the NSL complex by mediating acetylation of KDM1A/LSD1. The NSL complex is required for nuclear architecture maintenance by mediating acetylation of LMNA. Promotes mitochondrial integrity by catalyzing acetylation of COX17. In addition to protein acetyltransferase activity, able to mediate protein propionylation. The chain is Histone acetyltransferase KAT8 (Kat8) from Rattus norvegicus (Rat).